Here is a 221-residue protein sequence, read N- to C-terminus: uncharacterized protein (221 aa).

Positions 20-63 (DFDRAMLDFQAMFPSLSNSHIEYVLRKYDGDVSATINELLYDNT) constitute a CUE domain. Residues 131 to 194 (EEKKKKSCSD…GPYIGEGEVK (64 aa)) form a disordered region. The segment covering 156–166 (KNSKNSKISVN) has biased composition (low complexity). Basic and acidic residues predominate over residues 169 to 183 (KKLEPRRRSDEDRVP).

This is an uncharacterized protein from Caenorhabditis elegans.